Reading from the N-terminus, the 53-residue chain is uncharacterized protein (53 aa).

Residues 28–45 (AIVFSLAVFGIVEAYYYW) form a helical membrane-spanning segment.

It is found in the host membrane. This is an uncharacterized protein from Acidianus convivator (ABV).